Consider the following 263-residue polypeptide: HTH-type transcriptional repressor NanR (263 aa).

Residues 1-25 (MDVMNAFDSQAEDSPTSLGRSLRRR) form a disordered region. The 69-residue stretch at 30-98 (KKLSEMVEEE…NGERARVSRP (69 aa)) folds into the HTH gntR-type domain. A DNA-binding region (H-T-H motif) is located at residues 58–77 (ERELMAFFNVGRPSVREALA).

It belongs to the NanR family.

Transcriptional repressor that controls expression of the genes required for the catabolism of sialic acids. The sequence is that of HTH-type transcriptional repressor NanR from Salmonella schwarzengrund (strain CVM19633).